We begin with the raw amino-acid sequence, 373 residues long: ATP phosphoribosyltransferase regulatory subunit (373 aa).

This sequence belongs to the class-II aminoacyl-tRNA synthetase family. HisZ subfamily. As to quaternary structure, heteromultimer composed of HisG and HisZ subunits.

The protein localises to the cytoplasm. It functions in the pathway amino-acid biosynthesis; L-histidine biosynthesis; L-histidine from 5-phospho-alpha-D-ribose 1-diphosphate: step 1/9. Its function is as follows. Required for the first step of histidine biosynthesis. May allow the feedback regulation of ATP phosphoribosyltransferase activity by histidine. The polypeptide is ATP phosphoribosyltransferase regulatory subunit (Rhizobium leguminosarum bv. trifolii (strain WSM2304)).